Here is a 579-residue protein sequence, read N- to C-terminus: Glutamate--tRNA ligase (579 aa).

The short motif at 114 to 124 is the 'HIGH' region element; sequence PNPNGPWHIGH.

This sequence belongs to the class-I aminoacyl-tRNA synthetase family. Glutamate--tRNA ligase type 2 subfamily.

The protein resides in the cytoplasm. It catalyses the reaction tRNA(Glu) + L-glutamate + ATP = L-glutamyl-tRNA(Glu) + AMP + diphosphate. Catalyzes the attachment of glutamate to tRNA(Glu) in a two-step reaction: glutamate is first activated by ATP to form Glu-AMP and then transferred to the acceptor end of tRNA(Glu). In Haloarcula marismortui (strain ATCC 43049 / DSM 3752 / JCM 8966 / VKM B-1809) (Halobacterium marismortui), this protein is Glutamate--tRNA ligase.